The chain runs to 584 residues: A-type ATP synthase subunit A 2 (584 aa).

227–234 (GGFGTGKT) serves as a coordination point for ATP.

Belongs to the ATPase alpha/beta chains family. In terms of assembly, has multiple subunits with at least A(3), B(3), C, D, E, F, H, I and proteolipid K(x).

It localises to the cell membrane. It catalyses the reaction ATP + H2O + 4 H(+)(in) = ADP + phosphate + 5 H(+)(out). Functionally, component of the A-type ATP synthase that produces ATP from ADP in the presence of a proton gradient across the membrane. The A chain is the catalytic subunit. In Methanospirillum hungatei JF-1 (strain ATCC 27890 / DSM 864 / NBRC 100397 / JF-1), this protein is A-type ATP synthase subunit A 2.